Here is a 351-residue protein sequence, read N- to C-terminus: Flap endonuclease 1 (351 aa).

Positions 1–98 (MDLAELVEEI…QELERRKKVK (98 aa)) are N-domain. Positions 27, 80, 154, 156, 175, 177, and 238 each coordinate Mg(2+). Residues 118–260 (ELKKYAQMSI…TAYRIIKKYG (143 aa)) are I-domain. The segment at 343-351 (RQTGLDQWF) is interaction with PCNA.

This sequence belongs to the XPG/RAD2 endonuclease family. FEN1 subfamily. In terms of assembly, interacts with PCNA. PCNA stimulates the nuclease activity without altering cleavage specificity. Mg(2+) serves as cofactor.

Structure-specific nuclease with 5'-flap endonuclease and 5'-3' exonuclease activities involved in DNA replication and repair. During DNA replication, cleaves the 5'-overhanging flap structure that is generated by displacement synthesis when DNA polymerase encounters the 5'-end of a downstream Okazaki fragment. Binds the unpaired 3'-DNA end and kinks the DNA to facilitate 5' cleavage specificity. Cleaves one nucleotide into the double-stranded DNA from the junction in flap DNA, leaving a nick for ligation. Also involved in the base excision repair (BER) pathway. Acts as a genome stabilization factor that prevents flaps from equilibrating into structures that lead to duplications and deletions. Also possesses 5'-3' exonuclease activity on nicked or gapped double-stranded DNA. The polypeptide is Flap endonuclease 1 (Sulfurisphaera tokodaii (strain DSM 16993 / JCM 10545 / NBRC 100140 / 7) (Sulfolobus tokodaii)).